We begin with the raw amino-acid sequence, 100 residues long: MARKSLIQREKKRRNLEQKYHLIRRSSKQEIRKVTSLSDKWEIHGKLQSPPRNSAPARLHRRCFLTGRPRANIRDFGLSGHILREMVHTCLLPGATRSSW.

This sequence belongs to the universal ribosomal protein uS14 family. As to quaternary structure, component of the chloroplast small ribosomal subunit (SSU). Mature 70S chloroplast ribosomes of higher plants consist of a small (30S) and a large (50S) subunit. The 30S small subunit contains 1 molecule of ribosomal RNA (16S rRNA) and 24 different proteins. The 50S large subunit contains 3 rRNA molecules (23S, 5S and 4.5S rRNA) and 33 different proteins.

Its subcellular location is the plastid. The protein localises to the chloroplast. Component of the chloroplast ribosome (chloro-ribosome), a dedicated translation machinery responsible for the synthesis of chloroplast genome-encoded proteins, including proteins of the transcription and translation machinery and components of the photosynthetic apparatus. The sequence is that of Small ribosomal subunit protein uS14c from Spinacia oleracea (Spinach).